The chain runs to 188 residues: UPF0301 protein ABO_0112 (188 aa).

It belongs to the UPF0301 (AlgH) family.

This chain is UPF0301 protein ABO_0112, found in Alcanivorax borkumensis (strain ATCC 700651 / DSM 11573 / NCIMB 13689 / SK2).